The chain runs to 316 residues: Aspartate carbamoyltransferase catalytic subunit (316 aa).

Carbamoyl phosphate contacts are provided by Arg-58 and Thr-59. Position 86 (Lys-86) interacts with L-aspartate. Carbamoyl phosphate is bound by residues Arg-108, His-136, and Gln-139. L-aspartate-binding residues include Arg-169 and Arg-223. Residues Gly-265 and Pro-266 each coordinate carbamoyl phosphate.

It belongs to the aspartate/ornithine carbamoyltransferase superfamily. ATCase family. Heterododecamer (2C3:3R2) of six catalytic PyrB chains organized as two trimers (C3), and six regulatory PyrI chains organized as three dimers (R2).

It carries out the reaction carbamoyl phosphate + L-aspartate = N-carbamoyl-L-aspartate + phosphate + H(+). The protein operates within pyrimidine metabolism; UMP biosynthesis via de novo pathway; (S)-dihydroorotate from bicarbonate: step 2/3. Catalyzes the condensation of carbamoyl phosphate and aspartate to form carbamoyl aspartate and inorganic phosphate, the committed step in the de novo pyrimidine nucleotide biosynthesis pathway. The polypeptide is Aspartate carbamoyltransferase catalytic subunit (Anaeromyxobacter sp. (strain Fw109-5)).